The chain runs to 99 residues: TSQGTTPDKVQLEVNCISNLPNNEVEETDLLRELEMIEENLFGKELSFVPEENRNSRHKRCMGYDIECNERLHCCADLECVKTSGRWWYKKTYCRRKSG.

3 cysteine pairs are disulfide-bonded: Cys61–Cys75, Cys68–Cys80, and Cys74–Cys94.

It belongs to the neurotoxin 14 (magi-1) family. 09 (magi-1) subfamily. In terms of tissue distribution, expressed by the venom gland.

The protein resides in the secreted. Its function is as follows. Inhibits voltage-gated sodium channels by binding to site 3. Insecticidal neurotoxin. The polypeptide is Mu-hexatoxin-Mg1c (Macrothele gigas (Japanese funnel web spider)).